The sequence spans 392 residues: Selenide, water dikinase 1 (392 aa).

S2 carries the N-acetylserine modification. C31 is an active-site residue. Residues K32, 67-69, D87, D110, and 161-164 contribute to the ATP site; these read GMD and GGQT. D69 is a Mg(2+) binding site. D110 is a binding site for Mg(2+). D265 serves as a coordination point for Mg(2+).

It belongs to the selenophosphate synthase 1 family. Class II subfamily. As to quaternary structure, homodimer. The cofactor is Mg(2+).

It is found in the cell membrane. Its subcellular location is the nucleus membrane. The catalysed reaction is hydrogenselenide + ATP + H2O = selenophosphate + AMP + phosphate + 2 H(+). Functionally, synthesizes selenophosphate from selenide and ATP. The sequence is that of Selenide, water dikinase 1 (Sephs1) from Mus musculus (Mouse).